Reading from the N-terminus, the 369-residue chain is Aspartate beta-hydroxylase domain-containing protein 2 (369 aa).

The Cytoplasmic segment spans residues 1 to 58 (MVWAPLGPPRTDCLTLLHTPSKDSPKMSLEWLVAWSWSLDGLRDCIATGIQSVRDCDT). A helical membrane pass occupies residues 59–79 (TAVITVACLLVLFVWYCYHVG). Topologically, residues 80–369 (REQPRPYVSV…ALDFIFAPGR (290 aa)) are lumenal. An N-linked (GlcNAc...) asparagine glycan is attached at N211. The 2-oxoglutarate site is built by W228 and S272. H283 serves as a coordination point for Fe cation. Residue 292 to 294 (RCH) coordinates 2-oxoglutarate. Residue H328 coordinates Fe cation. Residue R341 coordinates 2-oxoglutarate.

The protein belongs to the aspartyl/asparaginyl beta-hydroxylase family. Fe cation serves as cofactor.

It localises to the membrane. Functionally, may function as 2-oxoglutarate-dependent dioxygenase. This chain is Aspartate beta-hydroxylase domain-containing protein 2 (ASPHD2), found in Homo sapiens (Human).